Consider the following 303-residue polypeptide: Peroxisomal trans-2-enoyl-CoA reductase (303 aa).

23–47 lines the NADP(+) pocket; it reads VTGGATGIGKAIVKELLELGSNVVI. Lysine 32 carries the post-translational modification N6-succinyllysine. A Phosphoserine modification is found at serine 49. The Proton acceptor role is filled by tyrosine 179. Tyrosine 179 bears the Phosphotyrosine mark. A Microbody targeting signal motif is present at residues 301 to 303; it reads AKL.

This sequence belongs to the short-chain dehydrogenases/reductases (SDR) family. In terms of assembly, interacts with PEX5, probably required to target it into peroxisomes.

The protein resides in the peroxisome. The enzyme catalyses a (2E)-enoyl-CoA + NADPH + H(+) = a 2,3-saturated acyl-CoA + NADP(+). The catalysed reaction is (2E)-hexenoyl-CoA + NADPH + H(+) = hexanoyl-CoA + NADP(+). It catalyses the reaction (2E)-octenoyl-CoA + NADPH + H(+) = octanoyl-CoA + NADP(+). It carries out the reaction (2E)-decenoyl-CoA + NADPH + H(+) = decanoyl-CoA + NADP(+). The enzyme catalyses (2E)-dodecenoyl-CoA + NADPH + H(+) = dodecanoyl-CoA + NADP(+). The catalysed reaction is (2E)-tetradecenoyl-CoA + NADPH + H(+) = tetradecanoyl-CoA + NADP(+). It participates in lipid metabolism; fatty acid biosynthesis. Participates in chain elongation of fatty acids. Catalyzes the reduction of trans-2-enoyl-CoAs of varying chain lengths from 6:1 to 16:1, having maximum activity with 10:1 CoA. Has no 2,4-dienoyl-CoA reductase activity. This is Peroxisomal trans-2-enoyl-CoA reductase (PECR) from Pongo abelii (Sumatran orangutan).